Reading from the N-terminus, the 258-residue chain is MKITKIEKKKRLYLIELDNDDSLYVTEDTIVRFMLSKDKVLDNDQLEDMKHFAQLSYGKNLALYFLSFQQRSNKQVADYLRKHEIEEHIIADIITQLQEEQWIDDTKLADTYIRQNQLNGDKGPQVLKQKLLQKGIASHDIDPILSQTDFSQLAQKVSQKLFDKYQEKLPPKALKDKITQALLTKGFSYDLAKHSLNHLNFDQNNQEIEDLLDKELDKQYRKLSRKYDGYTLKQKLYQALYRKGYNSDDINCKLRNYL.

This sequence belongs to the RecX family.

The protein resides in the cytoplasm. Modulates RecA activity. In Streptococcus pyogenes serotype M3 (strain ATCC BAA-595 / MGAS315), this protein is Regulatory protein RecX.